We begin with the raw amino-acid sequence, 235 residues long: Protein LIFEGUARD 1 (235 aa).

7 consecutive transmembrane segments (helical) span residues 33–53 (YSIL…VYFV), 67–87 (LAVF…LLAF), 95–115 (CIVL…CCSL), 120–140 (IVLE…IYTF), 149–169 (FSFL…FTLL), 178–198 (LSSM…IIFD), and 212–232 (ITAA…LLGI).

The protein belongs to the BI1 family. Expressed at very low in leaves.

It localises to the membrane. In terms of biological role, (Microbial infection) Facilitates the development of the powdery mildew fungus E.cruciferarum. Functionally, (Microbial infection) May prevent cell death upon A.alternata f.sp. lycopersici (AAL) toxin treatment. This chain is Protein LIFEGUARD 1, found in Arabidopsis thaliana (Mouse-ear cress).